A 200-amino-acid chain; its full sequence is Small ribosomal subunit protein eS8B (200 aa).

A disordered region spans residues 1–41 (MGITRDSRHKRSATGAKRAQYRKKRKFELGRQPSNTRIGPK). Serine 62 and serine 99 each carry phosphoserine. The tract at residues 124 to 145 (KGKKATATPTPKSKHVQRKHSA) is disordered. A compositionally biased stretch (basic residues) spans 135–145 (KSKHVQRKHSA). Phosphoserine occurs at positions 150, 154, and 171.

This sequence belongs to the eukaryotic ribosomal protein eS8 family. As to quaternary structure, component of the small ribosomal subunit (SSU). Mature yeast ribosomes consist of a small (40S) and a large (60S) subunit. The 40S small subunit contains 1 molecule of ribosomal RNA (18S rRNA) and at least 33 different proteins. The large 60S subunit contains 3 rRNA molecules (25S, 5.8S and 5S rRNA) and at least 46 different proteins.

It is found in the cytoplasm. Component of the ribosome, a large ribonucleoprotein complex responsible for the synthesis of proteins in the cell. The small ribosomal subunit (SSU) binds messenger RNAs (mRNAs) and translates the encoded message by selecting cognate aminoacyl-transfer RNA (tRNA) molecules. The large subunit (LSU) contains the ribosomal catalytic site termed the peptidyl transferase center (PTC), which catalyzes the formation of peptide bonds, thereby polymerizing the amino acids delivered by tRNAs into a polypeptide chain. The nascent polypeptides leave the ribosome through a tunnel in the LSU and interact with protein factors that function in enzymatic processing, targeting, and the membrane insertion of nascent chains at the exit of the ribosomal tunnel. The protein is Small ribosomal subunit protein eS8B (rps802) of Schizosaccharomyces pombe (strain 972 / ATCC 24843) (Fission yeast).